We begin with the raw amino-acid sequence, 203 residues long: Dephospho-CoA kinase (203 aa).

Positions 6–203 (ILGLTGGIGS…FYLTLRGGRA (198 aa)) constitute a DPCK domain. 14 to 19 (GSGKSA) provides a ligand contact to ATP.

It belongs to the CoaE family.

The protein localises to the cytoplasm. It carries out the reaction 3'-dephospho-CoA + ATP = ADP + CoA + H(+). The protein operates within cofactor biosynthesis; coenzyme A biosynthesis; CoA from (R)-pantothenate: step 5/5. Functionally, catalyzes the phosphorylation of the 3'-hydroxyl group of dephosphocoenzyme A to form coenzyme A. The polypeptide is Dephospho-CoA kinase (Pseudomonas aeruginosa (strain ATCC 15692 / DSM 22644 / CIP 104116 / JCM 14847 / LMG 12228 / 1C / PRS 101 / PAO1)).